Here is a 109-residue protein sequence, read N- to C-terminus: UPF0102 protein Suden_1901 (109 aa).

Belongs to the UPF0102 family.

This chain is UPF0102 protein Suden_1901, found in Sulfurimonas denitrificans (strain ATCC 33889 / DSM 1251) (Thiomicrospira denitrificans (strain ATCC 33889 / DSM 1251)).